Consider the following 793-residue polypeptide: Short transient receptor potential channel 1 (793 aa).

Positions 1 to 30 (MMAALYPSTDLSGASSSSLPSSPSSSSPNE) are disordered. Residues 1-345 (MMAALYPSTD…FGQMSGYRRK (345 aa)) lie on the Cytoplasmic side of the membrane. Low complexity predominate over residues 15–28 (SSSSLPSSPSSSSP). 4 ANK repeats span residues 46-75 (LNEK…SGDL), 83-109 (LGRN…YGCQ), 111-156 (ADAL…EYST), and 158-180 (MDVA…MLLK). Positions 189, 193, 195, and 198 each coordinate Zn(2+). Residues 346-379 (PTCKKIMTVLTVGIFWPVLSLCYLIAPKSQFGRI) constitute an intramembrane region (discontinuously helical). At 380 to 386 (IHTPFMK) the chain is on the cytoplasmic side. The chain crosses the membrane as a helical span at residues 387-404 (FIIHGASYFTFLLLLNLY). Topologically, residues 405 to 422 (SLVYNEDKKNTMGPALER) are extracellular. The helical transmembrane segment at 423–439 (IDYLLILWIIGMIWSDI) threads the bilayer. At 440–455 (KRLWYEGLEDFLEESR) the chain is on the cytoplasmic side. A helical membrane pass occupies residues 456-475 (NQLSFVMNSLYLATFALKVV). Over 476-496 (AHNKFHDFADRKDWDAFHPTL) the chain is Extracellular. Residues 497–517 (VAEGLFAFANVLSYLRLFFMY) traverse the membrane as a helical segment. Topologically, residues 518–536 (TTSSILGPLQISMGQMLQD) are cytoplasmic. The chain crosses the membrane as a helical span at residues 537-558 (FGKFLGMFLLVLFSFTIGLTQL). Over 559–623 (YDKGYTSKEQ…GEELQSFVGA (65 aa)) the chain is Extracellular. An intrachain disulfide couples cysteine 571 to cysteine 576. A helical membrane pass occupies residues 624-644 (VIVGTYNVVVVIVLTKLLVAM). Over 645–793 (LHKSFQLIAN…SKYAMFYPRN (149 aa)) the chain is Cytoplasmic.

It belongs to the transient receptor (TC 1.A.4) family. STrpC subfamily. TRPC1 sub-subfamily. Heterotetramer with TRPC4 and/or TRPC5. Forms a heteromeric ion channel with TRPC4, with a 1:3 TRPC1:TRPC4 stoichiometry. Unlike other TRP channel proteins, does not form a homomeric channel. Interacts with TRPC4AP. Interacts with ITPR3. Interacts with MX1 and RNF24. Interacts with FKBP4. Interacts with PLSCR1. Interacts with PKD2L2. Forms a heterotetramer with PKD2 with a 2:2 stoichiometry; has distinct channel properties separate from PKD2 or TRPC1 homomers alone. As to quaternary structure, interacts with isoform 2 of TRPC3. In terms of processing, activation of PRKCA induces phosphorylation of TRPC1 and subsequent Ca2+ entry into cells. In terms of tissue distribution, seems to be ubiquitous.

Its subcellular location is the cell membrane. The catalysed reaction is Ca(2+)(in) = Ca(2+)(out). It catalyses the reaction Na(+)(in) = Na(+)(out). The enzyme catalyses Li(+)(in) = Li(+)(out). It carries out the reaction Cs(+)(in) = Cs(+)(out). With respect to regulation, may be operated by a phosphatidylinositol second messenger system activated by receptor tyrosine kinases or G-protein coupled receptors. Also activated by intracellular calcium store depletion. Inhibited by xanthine-based inhibitor Pico145. In terms of biological role, forms a receptor-activated non-selective calcium permeant cation channel. Forms a heteromeric ion channel with TRPC4 or TRPC5 that has reduced calcium permeability compared to the homomeric TRPC4 or TRPC5 channel. Also permeable to monovalent ions including sodium, lithium and cesium ions. Forms a receptor-activated non-selective calcium permeant cation channel. Also activated by intracellular calcium store depletion. The sequence is that of Short transient receptor potential channel 1 (TRPC1) from Homo sapiens (Human).